An 88-amino-acid polypeptide reads, in one-letter code: MRLFLSLPVLVVVLAMVLEGPAPAQAAPEISSTLERIPDKLKEFGNTLENKARAAIESIKQSDLPAKTRNWFSETFNKVKEQLKTTFS.

Positions 1-26 are cleaved as a signal peptide; it reads MRLFLSLPVLVVVLAMVLEGPAPAQA.

Belongs to the apolipoprotein C1 family.

Its subcellular location is the secreted. Inhibitor of lipoprotein binding to the low density lipoprotein (LDL) receptor, LDL receptor-related protein, and very low density lipoprotein (VLDL) receptor. Associates with high density lipoproteins (HDL) and the triacylglycerol-rich lipoproteins in the plasma and makes up about 10% of the protein of the VLDL and 2% of that of HDL. Appears to interfere directly with fatty acid uptake and is also the major plasma inhibitor of cholesteryl ester transfer protein (CETP). Binds free fatty acids and reduces their intracellular esterification. Modulates the interaction of APOE with beta-migrating VLDL and inhibits binding of beta-VLDL to the LDL receptor-related protein. The polypeptide is Apolipoprotein C-I (APOC1) (Arctocephalus gazella (Antarctic fur seal)).